Reading from the N-terminus, the 396-residue chain is 1-deoxy-D-xylulose 5-phosphate reductoisomerase (396 aa).

6 residues coordinate NADPH: Thr-10, Gly-11, Ser-12, Ile-13, Asn-38, and Asn-123. Residue Lys-124 participates in 1-deoxy-D-xylulose 5-phosphate binding. Residue Glu-125 participates in NADPH binding. Asp-149 provides a ligand contact to Mn(2+). 4 residues coordinate 1-deoxy-D-xylulose 5-phosphate: Ser-150, Glu-151, Ser-185, and His-208. Residue Glu-151 coordinates Mn(2+). Gly-214 serves as a coordination point for NADPH. 1-deoxy-D-xylulose 5-phosphate-binding residues include Ser-221, Asn-226, Lys-227, and Glu-230. Position 230 (Glu-230) interacts with Mn(2+).

It belongs to the DXR family. Requires Mg(2+) as cofactor. Mn(2+) is required as a cofactor.

The catalysed reaction is 2-C-methyl-D-erythritol 4-phosphate + NADP(+) = 1-deoxy-D-xylulose 5-phosphate + NADPH + H(+). It functions in the pathway isoprenoid biosynthesis; isopentenyl diphosphate biosynthesis via DXP pathway; isopentenyl diphosphate from 1-deoxy-D-xylulose 5-phosphate: step 1/6. Its function is as follows. Catalyzes the NADPH-dependent rearrangement and reduction of 1-deoxy-D-xylulose-5-phosphate (DXP) to 2-C-methyl-D-erythritol 4-phosphate (MEP). The sequence is that of 1-deoxy-D-xylulose 5-phosphate reductoisomerase from Shewanella halifaxensis (strain HAW-EB4).